The chain runs to 244 residues: tRNA pseudouridine synthase A (244 aa).

The active-site Nucleophile is the aspartate 52. Tyrosine 110 provides a ligand contact to substrate.

This sequence belongs to the tRNA pseudouridine synthase TruA family. As to quaternary structure, homodimer.

The catalysed reaction is uridine(38/39/40) in tRNA = pseudouridine(38/39/40) in tRNA. Functionally, formation of pseudouridine at positions 38, 39 and 40 in the anticodon stem and loop of transfer RNAs. The sequence is that of tRNA pseudouridine synthase A from Clostridium botulinum (strain Eklund 17B / Type B).